Here is a 143-residue protein sequence, read N- to C-terminus: Large ribosomal subunit protein uL11 (143 aa).

Belongs to the universal ribosomal protein uL11 family. As to quaternary structure, part of the ribosomal stalk of the 50S ribosomal subunit. Interacts with L10 and the large rRNA to form the base of the stalk. L10 forms an elongated spine to which L12 dimers bind in a sequential fashion forming a multimeric L10(L12)X complex. One or more lysine residues are methylated.

Its function is as follows. Forms part of the ribosomal stalk which helps the ribosome interact with GTP-bound translation factors. The sequence is that of Large ribosomal subunit protein uL11 from Nitrosomonas eutropha (strain DSM 101675 / C91 / Nm57).